Reading from the N-terminus, the 332-residue chain is Receptor polysaccharide phosphotransferase WefC (332 aa).

The protein belongs to the stealth family.

In Streptococcus oralis, this protein is Receptor polysaccharide phosphotransferase WefC (wefC).